The following is a 377-amino-acid chain: RIB43A-like with coiled-coils protein 2 (377 aa).

A coiled-coil region spans residues 188-238 (ELKFDEAARDLQRLEITTRKAVCAAVKEFNKKQVVELAERKRQVKQQEQED). Residues 355–377 (QLDAAPSSQPTEDYFSQFNTRSR) form a disordered region. The span at 360-377 (PSSQPTEDYFSQFNTRSR) shows a compositional bias: polar residues.

The protein belongs to the RIB43A family. Microtubule inner protein component of sperm flagellar doublet microtubules.

Its subcellular location is the cytoplasm. It localises to the cytoskeleton. It is found in the cilium axoneme. The protein localises to the flagellum axoneme. In terms of biological role, microtubule inner protein (MIP) part of the dynein-decorated doublet microtubules (DMTs) in cilia axoneme, which is required for motile cilia beating. This is RIB43A-like with coiled-coils protein 2 from Rattus norvegicus (Rat).